A 283-amino-acid chain; its full sequence is MITHPQFDPVLISIGPLAVRWYALSYILGFILFTFLGRRRIAQGLSVFTKESLDDFLTWGILGVILGGRLGYVLFYKFSDYLAHPLDIFKVWEGGMSFHGGFLGVVIAIRLFGRKHGIGFLKLMDTVAPLVPLGLASGRIGNFINGELWGRVTDINAFWAMGFPQARYEDAEAAAHNPLWAEWLQQYGMLPRHPSQLYQFALEGICLFTVIWLFSKKQRSTGQVASLFLGGYGIFRFIAEFARQPDDYLGLLTLGLSMGQWLSVPMIVLGIVGFVRFGMKKQH.

The next 3 membrane-spanning stretches (helical) occupy residues Leu17 to Gly37, Phe56 to Tyr76, and Ile88 to Ala108. Residue Arg139 participates in a 1,2-diacyl-sn-glycero-3-phospho-(1'-sn-glycerol) binding. 2 consecutive transmembrane segments (helical) span residues Gly222–Ala242 and Gly255–Val275.

The protein belongs to the Lgt family.

It is found in the cell inner membrane. The enzyme catalyses L-cysteinyl-[prolipoprotein] + a 1,2-diacyl-sn-glycero-3-phospho-(1'-sn-glycerol) = an S-1,2-diacyl-sn-glyceryl-L-cysteinyl-[prolipoprotein] + sn-glycerol 1-phosphate + H(+). Its pathway is protein modification; lipoprotein biosynthesis (diacylglyceryl transfer). Its function is as follows. Catalyzes the transfer of the diacylglyceryl group from phosphatidylglycerol to the sulfhydryl group of the N-terminal cysteine of a prolipoprotein, the first step in the formation of mature lipoproteins. In Neisseria meningitidis serogroup B (strain ATCC BAA-335 / MC58), this protein is Phosphatidylglycerol--prolipoprotein diacylglyceryl transferase.